We begin with the raw amino-acid sequence, 312 residues long: Glycerol-3-phosphate dehydrogenase [NAD(P)+] (312 aa).

NADPH is bound by residues W11, R30, R31, and K95. Sn-glycerol 3-phosphate contacts are provided by K95, G123, and S125. A127 lines the NADPH pocket. K177, D230, S240, R241, and N242 together coordinate sn-glycerol 3-phosphate. Residue K177 is the Proton acceptor of the active site. NADPH is bound at residue R241. Positions 265 and 267 each coordinate NADPH.

The protein belongs to the NAD-dependent glycerol-3-phosphate dehydrogenase family.

It is found in the cytoplasm. It catalyses the reaction sn-glycerol 3-phosphate + NAD(+) = dihydroxyacetone phosphate + NADH + H(+). It carries out the reaction sn-glycerol 3-phosphate + NADP(+) = dihydroxyacetone phosphate + NADPH + H(+). It participates in membrane lipid metabolism; glycerophospholipid metabolism. Its function is as follows. Catalyzes the reduction of the glycolytic intermediate dihydroxyacetone phosphate (DHAP) to sn-glycerol 3-phosphate (G3P), the key precursor for phospholipid synthesis. In Helicobacter acinonychis (strain Sheeba), this protein is Glycerol-3-phosphate dehydrogenase [NAD(P)+].